Here is a 440-residue protein sequence, read N- to C-terminus: C4-dicarboxylate transport protein (440 aa).

Helical transmembrane passes span 15–35 (VLVAITIGILLGHYYPETGVA), 46–66 (LIKMVIAPIIFCTVVSGIAGM), 78–98 (YALLYFEIVSTIALIIGLVVV), 146–166 (AFANGDILQVLMFSVLFGFAL), 190–210 (IINMIMKLAPIGAFGAMAFTI), 224–244 (LMACFYITCILFVLVVLGGIC), 291–311 (VVGLVIPTGYSFNLDGTSIYL), 332–352 (ITLLLVLLVASKGAAGVTGSG), and 354–374 (IVLAATLSAVGHLPVAGLALI). Positions 419 to 440 (GGSPLVDTRPTDDLGVAEGPAR) are disordered.

This sequence belongs to the dicarboxylate/amino acid:cation symporter (DAACS) (TC 2.A.23) family.

The protein localises to the cell inner membrane. Its function is as follows. Responsible for the transport of dicarboxylates such as succinate, fumarate, and malate from the periplasm across the membrane. This chain is C4-dicarboxylate transport protein, found in Pseudomonas entomophila (strain L48).